The sequence spans 525 residues: COP9 signalosome complex subunit 1b (525 aa).

In terms of domain architecture, PCI spans 298 to 460 (HFLNANFDHC…KILFAKEADQ (163 aa)).

Belongs to the CSN1 family. As to quaternary structure, component of the CSN complex, probably composed of CSN1b, alien/CSN2, CSN3, CSN4, CSN5, CSN6, CSN7 and CSN8.

The protein resides in the cytoplasm. It localises to the nucleus. In terms of biological role, essential component of the COP9 signalosome complex (CSN), a complex involved in various cellular and developmental processes. The CSN complex is an essential regulator of the ubiquitin (Ubl) conjugation pathway by mediating the deneddylation of the cullin subunits of the SCF-type E3 ligase complexes, leading to decrease the Ubl ligase activity of SCF. The CSN complex plays an essential role in oogenesis and embryogenesis and is required for proper photoreceptor R cell differentiation and promote lamina glial cell migration or axon targeting. It also promotes Ubl-dependent degradation of cyclin E (CycE) during early oogenesis. The protein is COP9 signalosome complex subunit 1b (CSN1b) of Drosophila melanogaster (Fruit fly).